A 167-amino-acid chain; its full sequence is Ribosome maturation factor RimM (167 aa).

One can recognise a PRC barrel domain in the interval 94–165 (EHEYYYSDII…TIKITPMEGL (72 aa)).

Belongs to the RimM family. In terms of assembly, binds ribosomal protein uS19.

It is found in the cytoplasm. An accessory protein needed during the final step in the assembly of 30S ribosomal subunit, possibly for assembly of the head region. Essential for efficient processing of 16S rRNA. May be needed both before and after RbfA during the maturation of 16S rRNA. It has affinity for free ribosomal 30S subunits but not for 70S ribosomes. This chain is Ribosome maturation factor RimM, found in Staphylococcus epidermidis (strain ATCC 35984 / DSM 28319 / BCRC 17069 / CCUG 31568 / BM 3577 / RP62A).